We begin with the raw amino-acid sequence, 321 residues long: Lipoyl synthase (321 aa).

[4Fe-4S] cluster contacts are provided by cysteine 68, cysteine 73, cysteine 79, cysteine 94, cysteine 98, cysteine 101, and serine 308. The Radical SAM core domain maps to 80–297 (FNHGTATFMI…KVLADELGFT (218 aa)).

The protein belongs to the radical SAM superfamily. Lipoyl synthase family. It depends on [4Fe-4S] cluster as a cofactor.

The protein localises to the cytoplasm. The enzyme catalyses [[Fe-S] cluster scaffold protein carrying a second [4Fe-4S](2+) cluster] + N(6)-octanoyl-L-lysyl-[protein] + 2 oxidized [2Fe-2S]-[ferredoxin] + 2 S-adenosyl-L-methionine + 4 H(+) = [[Fe-S] cluster scaffold protein] + N(6)-[(R)-dihydrolipoyl]-L-lysyl-[protein] + 4 Fe(3+) + 2 hydrogen sulfide + 2 5'-deoxyadenosine + 2 L-methionine + 2 reduced [2Fe-2S]-[ferredoxin]. It functions in the pathway protein modification; protein lipoylation via endogenous pathway; protein N(6)-(lipoyl)lysine from octanoyl-[acyl-carrier-protein]: step 2/2. Functionally, catalyzes the radical-mediated insertion of two sulfur atoms into the C-6 and C-8 positions of the octanoyl moiety bound to the lipoyl domains of lipoate-dependent enzymes, thereby converting the octanoylated domains into lipoylated derivatives. The chain is Lipoyl synthase from Shewanella sp. (strain ANA-3).